A 526-amino-acid chain; its full sequence is ATP synthase subunit alpha (526 aa).

ATP is bound at residue Gly-171–Thr-178.

The protein belongs to the ATPase alpha/beta chains family. In terms of assembly, F-type ATPases have 2 components, CF(1) - the catalytic core - and CF(0) - the membrane proton channel. CF(1) has five subunits: alpha(3), beta(3), gamma(1), delta(1), epsilon(1). CF(0) has four main subunits: a, b, b' and c.

It localises to the cell inner membrane. It catalyses the reaction ATP + H2O + 4 H(+)(in) = ADP + phosphate + 5 H(+)(out). Functionally, produces ATP from ADP in the presence of a proton gradient across the membrane. The alpha chain is a regulatory subunit. This is ATP synthase subunit alpha from Pelodictyon phaeoclathratiforme (strain DSM 5477 / BU-1).